Here is a 602-residue protein sequence, read N- to C-terminus: Elongation factor 4 (602 aa).

Residues 2 to 184 (DHIRNFSIIA…AVIARMPPPK (183 aa)) enclose the tr-type G domain. Residues 14–19 (DHGKST) and 131–134 (NKMD) contribute to the GTP site.

This sequence belongs to the TRAFAC class translation factor GTPase superfamily. Classic translation factor GTPase family. LepA subfamily.

The protein resides in the cell inner membrane. It catalyses the reaction GTP + H2O = GDP + phosphate + H(+). Required for accurate and efficient protein synthesis under certain stress conditions. May act as a fidelity factor of the translation reaction, by catalyzing a one-codon backward translocation of tRNAs on improperly translocated ribosomes. Back-translocation proceeds from a post-translocation (POST) complex to a pre-translocation (PRE) complex, thus giving elongation factor G a second chance to translocate the tRNAs correctly. Binds to ribosomes in a GTP-dependent manner. This Leptothrix cholodnii (strain ATCC 51168 / LMG 8142 / SP-6) (Leptothrix discophora (strain SP-6)) protein is Elongation factor 4.